A 240-amino-acid polypeptide reads, in one-letter code: ATP synthase subunit a (240 aa).

6 helical membrane passes run 41–61 (WLVMAFLFLVSKFTLGNLEII), 92–112 (FFPMIATFALYIAVANLIGLI), 121–141 (SINTTLALTLIVWATHHVIGF), 152–172 (FIGPMKWLVPLMLPIELISNF), 191–211 (VLLGILFGLAGMFFAPLPIMV), and 212–232 (LGVLVSLVQAMVFVLLTVVYF).

It belongs to the ATPase A chain family. As to quaternary structure, F-type ATPases have 2 components, CF(1) - the catalytic core - and CF(0) - the membrane proton channel. CF(1) has five subunits: alpha(3), beta(3), gamma(1), delta(1), epsilon(1). CF(0) has three main subunits: a(1), b(2) and c(9-12). The alpha and beta chains form an alternating ring which encloses part of the gamma chain. CF(1) is attached to CF(0) by a central stalk formed by the gamma and epsilon chains, while a peripheral stalk is formed by the delta and b chains.

The protein resides in the cell inner membrane. Its function is as follows. Key component of the proton channel; it plays a direct role in the translocation of protons across the membrane. This chain is ATP synthase subunit a, found in Desulfotalea psychrophila (strain LSv54 / DSM 12343).